Reading from the N-terminus, the 337-residue chain is MPIRHCIVHLIEKKPDGSPAVLHARDSELAESQALENLLVDLNDSYNAKQGKAWGLFQEESGAYPFSGWLGAYLEGARDFAAFSRQAVEHLKTLMEESNLSSGGHVLFAHYQQGMTEYLAIALLHHSEGVTVTETLEVAPAKHLDLAQLHLAARINLSEWRNNRQSKQYISFIKGKNGKKVSDYFRDFIGCREGVDAPGETRTLLKAFSDFVESEDLAEEEAREKTSALVDYASTQARLGAPIALEELSGLIDEERPRAFYEHIRNKDYGLSPEIPPDKRTLNQFRRFTGRAEGLSISFEAHLLGSRVEYDEEHDTLTIRQVPSQLKDQLKRRKDGQ.

It belongs to the YejK family.

Its subcellular location is the cytoplasm. It localises to the nucleoid. This Azotobacter vinelandii (strain DJ / ATCC BAA-1303) protein is Nucleoid-associated protein Avin_11450.